The sequence spans 276 residues: Undecaprenyl-diphosphatase 2 (276 aa).

Helical transmembrane passes span 1–21, 44–64, 87–107, 114–134, 150–170, 190–210, 222–242, and 251–271; these read MSLWFLVFLSVLQGVTELFPV, QLLPFLVALHLGTALALLWYF, GHLMWALIIGTIPTGIVGLLL, VFHDLRIVAIALIVNGVLLWL, MTFKQAFFVGLAQIGALIPGF, AAEFSFLLGTPIIFAAGVLEL, DALLGGVLTAIAAYLSVRFLM, and LASFGVYCVIAGVFCLGWFML.

Belongs to the UppP family.

The protein resides in the cell inner membrane. The catalysed reaction is di-trans,octa-cis-undecaprenyl diphosphate + H2O = di-trans,octa-cis-undecaprenyl phosphate + phosphate + H(+). Its function is as follows. Catalyzes the dephosphorylation of undecaprenyl diphosphate (UPP). Confers resistance to bacitracin. The polypeptide is Undecaprenyl-diphosphatase 2 (Burkholderia orbicola (strain AU 1054)).